Reading from the N-terminus, the 676-residue chain is Forkhead box protein biniou (676 aa).

5 disordered regions span residues 22 to 50 (YHDP…GHPY), 131 to 160 (AHSA…SSST), 203 to 232 (QEQA…SRIS), 249 to 312 (NYSS…PEKP), and 583 to 651 (IQHA…AYLP). Basic residues predominate over residues 34–48 (PHAHSHPHQHTHTGH). The span at 133-160 (SAGSASPQSNSKTPTDLPQDLQYASSST) shows a compositional bias: polar residues. The span at 203–220 (QEQAGQQQPQQLPAQQLQ) shows a compositional bias: low complexity. The span at 257 to 273 (PAKSLNGSESSPPSQNH) shows a compositional bias: polar residues. Positions 311–408 (KPALSYINMI…DEGSLRRRPR (98 aa)) form a DNA-binding region, fork-head. Positions 583-593 (IQHAQAQAQAQ) are enriched in low complexity. Residues 594 to 611 (AHHHHHQHHASHPSHSHQ) show a composition bias toward basic residues. Positions 612-625 (GHGSMHQNHGTSST) are enriched in low complexity. Residues 637–647 (GIDHSPIDRKP) show a composition bias toward basic and acidic residues.

As to quaternary structure, binds to DNA. In embryo, expressed in all types of visceral muscles and their progenitors (at protein level). In late stage 10 embryo, expressed in the caudal visceral mesoderm and trunk and hindgut visceral mesoderm progenitors.

It is found in the nucleus. Functionally, component of a regulatory network controlling visceral mesoderm development and midgut morphogenesis. Transcriptional regulator involved in the activation of a large number of genes in the visceral mesoderm including betaTub60D, dpp and Hand. Binds to and regulates a number of enhancers driving expression in the visceral mesoderm in a temporally and spatially restricted manner. Also to binds to enhancers cooperatively with activators, such as bap or HLH54F, to coregulate expression of shared target genes in the visceral mesoderm. Binds to the Ndg enhancer and drives expression of Ndg in the late visceral musculature. May be involved in the transcriptional regulation of wupA in the visceral mesoderm. Plays an indirect role in the later stages of salivary gland positioning. The chain is Forkhead box protein biniou (bin) from Drosophila melanogaster (Fruit fly).